The sequence spans 448 residues: Trigger factor (448 aa).

Residues 172-257 (GDRVTVDFVG…MKKIEWPHLP (86 aa)) enclose the PPIase FKBP-type domain.

It belongs to the FKBP-type PPIase family. Tig subfamily.

The protein localises to the cytoplasm. The catalysed reaction is [protein]-peptidylproline (omega=180) = [protein]-peptidylproline (omega=0). Functionally, involved in protein export. Acts as a chaperone by maintaining the newly synthesized protein in an open conformation. Functions as a peptidyl-prolyl cis-trans isomerase. This is Trigger factor from Burkholderia cenocepacia (strain HI2424).